A 235-amino-acid chain; its full sequence is Segregation and condensation protein A (235 aa).

This sequence belongs to the ScpA family. In terms of assembly, component of a cohesin-like complex composed of ScpA, ScpB and the Smc homodimer, in which ScpA and ScpB bind to the head domain of Smc. The presence of the three proteins is required for the association of the complex with DNA.

Its subcellular location is the cytoplasm. Functionally, participates in chromosomal partition during cell division. May act via the formation of a condensin-like complex containing Smc and ScpB that pull DNA away from mid-cell into both cell halves. This chain is Segregation and condensation protein A, found in Streptococcus agalactiae serotype Ia (strain ATCC 27591 / A909 / CDC SS700).